Reading from the N-terminus, the 152-residue chain is 6,7-dimethyl-8-ribityllumazine synthase (152 aa).

Residues Phe21, 55–57 (AFE), and 79–81 (CVI) contribute to the 5-amino-6-(D-ribitylamino)uracil site. 84–85 (ST) contributes to the (2S)-2-hydroxy-3-oxobutyl phosphate binding site. His87 functions as the Proton donor in the catalytic mechanism. Phe112 contacts 5-amino-6-(D-ribitylamino)uracil. Arg126 is a binding site for (2S)-2-hydroxy-3-oxobutyl phosphate.

It belongs to the DMRL synthase family. In terms of assembly, forms an icosahedral capsid composed of 60 subunits, arranged as a dodecamer of pentamers.

The enzyme catalyses (2S)-2-hydroxy-3-oxobutyl phosphate + 5-amino-6-(D-ribitylamino)uracil = 6,7-dimethyl-8-(1-D-ribityl)lumazine + phosphate + 2 H2O + H(+). Its pathway is cofactor biosynthesis; riboflavin biosynthesis; riboflavin from 2-hydroxy-3-oxobutyl phosphate and 5-amino-6-(D-ribitylamino)uracil: step 1/2. Functionally, catalyzes the formation of 6,7-dimethyl-8-ribityllumazine by condensation of 5-amino-6-(D-ribitylamino)uracil with 3,4-dihydroxy-2-butanone 4-phosphate. This is the penultimate step in the biosynthesis of riboflavin. The protein is 6,7-dimethyl-8-ribityllumazine synthase of Staphylococcus saprophyticus subsp. saprophyticus (strain ATCC 15305 / DSM 20229 / NCIMB 8711 / NCTC 7292 / S-41).